We begin with the raw amino-acid sequence, 167 residues long: I-Kappa-B like protein F2 (167 aa).

3 ANK repeats span residues 54–86 (HGKQCVHIVSNPGIADPQEKLKLLMEWGADING), 91–121 (FGNTPLHIAAYTQNHKLATWLCNQPGINMGI), and 125–154 (LFKTPYYVACERHDLKIMNILRAKGTRCGV).

The protein belongs to the polydnaviridae I-Kappa-B-like protein family.

In terms of biological role, suppresses the host immune response through NF-kappa-B inactivation. Possesses ankyrin repeat domains required for NF-kappa-B binding but lacks the regulatory regions required for dissociation from NF-kappa-B and degradation. Therefore, prevents host NF-kappa-B release and subsequent activation. In Microplitis demolitor bracovirus (isolate Webb) (MdBV), this protein is I-Kappa-B like protein F2 (F3).